The sequence spans 103 residues: Large ribosomal subunit protein uL23 (103 aa).

The protein belongs to the universal ribosomal protein uL23 family. As to quaternary structure, part of the 50S ribosomal subunit. Contacts protein L29, and trigger factor when it is bound to the ribosome.

In terms of biological role, one of the early assembly proteins it binds 23S rRNA. One of the proteins that surrounds the polypeptide exit tunnel on the outside of the ribosome. Forms the main docking site for trigger factor binding to the ribosome. The polypeptide is Large ribosomal subunit protein uL23 (Chlorobium phaeobacteroides (strain DSM 266 / SMG 266 / 2430)).